Reading from the N-terminus, the 1755-residue chain is Transposon Ty1-PR1 Gag-Pol polyprotein (1755 aa).

4 stretches are compositionally biased toward polar residues: residues 1 to 23, 48 to 60, 71 to 93, and 127 to 152; these read MESQQLSQHSPISHGSACASVTS, TKANSQQTTTPAS, SPQTAQSHSPQNGPYPQQCMMTQ, and QSQFPQYPSSVGTPLSTPSPESGNTF. 3 disordered regions span residues 1–93, 126–173, and 352–421; these read MESQ…MMTQ, PQSQ…RPPP, and GSRN…SKST. Residues 153 to 165 show a composition bias toward low complexity; that stretch reads TDSSSADSDMTST. The interval 299 to 401 is RNA-binding; the sequence is NNGIHINNKV…NSKSKTARAH (103 aa). Low complexity predominate over residues 402–418; sequence NVSTSNNSPSTDNDSIS. Ser416 bears the Phosphoserine mark. The active-site For protease activity; shared with dimeric partner is Asp461. An integrase-type zinc finger-like region spans residues 583-640; it reads NVHTSESTRKYPYPFIHRMLAHANAQTIRYSLKNNTITYFNESDVDWSSAIDYQCPDC. The region spanning 660 to 835 is the Integrase catalytic domain; it reads NSYEPFQYLH…AGLDISTLLP (176 aa). Positions 671 and 736 each coordinate Mg(2+). Disordered stretches follow at residues 956–1087, 1092–1111, and 1130–1187; these read SKAV…ETEK, RSPSIDASPPENNSSHNIVP, and DLPL…DNET. Residues 960 to 969 show a composition bias toward low complexity; the sequence is SPTDSTPPST. Over residues 1005–1015 the composition is skewed to polar residues; sequence STPQISNIEST. The segment covering 1038–1053 has biased composition (basic and acidic residues); it reads ESSHASKSKDFRHSDS. Polar residues-rich tracts occupy residues 1054-1082 and 1101-1111; these read YSENETNHTNVPISSTGGTNNKTVPQISD and PENNSSHNIVP. Residues 1178-1212 carry the Bipartite nuclear localization signal motif; it reads KKRSLEDNETEIKVSRDTWNTKNMRSLEPPRSKKR. Residues 1338-1476 form the Reverse transcriptase Ty1/copia-type domain; it reads NNYYITQLDI…DILGLEIKYQ (139 aa). 6 residues coordinate Mg(2+): Asp1346, Asp1427, Asp1428, Asp1610, Glu1652, and Asp1685. The 143-residue stretch at 1610–1752 folds into the RNase H Ty1/copia-type domain; it reads DASYGNQPYY…IKTFKLLTNK (143 aa).

The capsid protein forms a homotrimer, from which the VLPs are assembled. The protease is a homodimer, whose active site consists of two apposed aspartic acid residues. In terms of processing, initially, virus-like particles (VLPs) are composed of the structural unprocessed proteins Gag and Gag-Pol, and also contain the host initiator methionine tRNA (tRNA(i)-Met) which serves as a primer for minus-strand DNA synthesis, and a dimer of genomic Ty RNA. Processing of the polyproteins occurs within the particle and proceeds by an ordered pathway, called maturation. First, the protease (PR) is released by autocatalytic cleavage of the Gag-Pol polyprotein yielding capsid protein p45 and a Pol-p154 precursor protein. This cleavage is a prerequisite for subsequent processing of Pol-p154 at the remaining sites to release the mature structural and catalytic proteins. Maturation takes place prior to the RT reaction and is required to produce transposition-competent VLPs.

The protein localises to the cytoplasm. It is found in the nucleus. The catalysed reaction is DNA(n) + a 2'-deoxyribonucleoside 5'-triphosphate = DNA(n+1) + diphosphate. It carries out the reaction Endonucleolytic cleavage to 5'-phosphomonoester.. In terms of biological role, capsid protein (CA) is the structural component of the virus-like particle (VLP), forming the shell that encapsulates the retrotransposons dimeric RNA genome. The particles are assembled from trimer-clustered units and there are holes in the capsid shells that allow for the diffusion of macromolecules. CA also has nucleocapsid-like chaperone activity, promoting primer tRNA(i)-Met annealing to the multipartite primer-binding site (PBS), dimerization of Ty1 RNA and initiation of reverse transcription. The aspartyl protease (PR) mediates the proteolytic cleavages of the Gag and Gag-Pol polyproteins after assembly of the VLP. Functionally, reverse transcriptase/ribonuclease H (RT) is a multifunctional enzyme that catalyzes the conversion of the retro-elements RNA genome into dsDNA within the VLP. The enzyme displays a DNA polymerase activity that can copy either DNA or RNA templates, and a ribonuclease H (RNase H) activity that cleaves the RNA strand of RNA-DNA heteroduplexes during plus-strand synthesis and hydrolyzes RNA primers. The conversion leads to a linear dsDNA copy of the retrotransposon that includes long terminal repeats (LTRs) at both ends. Its function is as follows. Integrase (IN) targets the VLP to the nucleus, where a subparticle preintegration complex (PIC) containing at least integrase and the newly synthesized dsDNA copy of the retrotransposon must transit the nuclear membrane. Once in the nucleus, integrase performs the integration of the dsDNA into the host genome. The sequence is that of Transposon Ty1-PR1 Gag-Pol polyprotein (TY1B-PR1) from Saccharomyces cerevisiae (strain ATCC 204508 / S288c) (Baker's yeast).